Here is a 248-residue protein sequence, read N- to C-terminus: 5'-nucleotidase SurE (248 aa).

A divalent metal cation contacts are provided by Asp8, Asp9, Ser39, and Asn91.

This sequence belongs to the SurE nucleotidase family. A divalent metal cation is required as a cofactor.

The protein resides in the cytoplasm. The enzyme catalyses a ribonucleoside 5'-phosphate + H2O = a ribonucleoside + phosphate. Its function is as follows. Nucleotidase that shows phosphatase activity on nucleoside 5'-monophosphates. This is 5'-nucleotidase SurE from Neisseria meningitidis serogroup C (strain 053442).